A 49-amino-acid chain; its full sequence is Large ribosomal subunit protein bL33A (49 aa).

The protein belongs to the bacterial ribosomal protein bL33 family.

The polypeptide is Large ribosomal subunit protein bL33A (Leuconostoc mesenteroides subsp. mesenteroides (strain ATCC 8293 / DSM 20343 / BCRC 11652 / CCM 1803 / JCM 6124 / NCDO 523 / NBRC 100496 / NCIMB 8023 / NCTC 12954 / NRRL B-1118 / 37Y)).